Reading from the N-terminus, the 73-residue chain is Translation initiation factor IF-1 (73 aa).

Residues 1–73 (MSKKKDVIEM…TRGRITYRYK (73 aa)) form the S1-like domain.

The protein belongs to the IF-1 family. In terms of assembly, component of the 30S ribosomal translation pre-initiation complex which assembles on the 30S ribosome in the order IF-2 and IF-3, IF-1 and N-formylmethionyl-tRNA(fMet); mRNA recruitment can occur at any time during PIC assembly.

The protein localises to the cytoplasm. One of the essential components for the initiation of protein synthesis. Stabilizes the binding of IF-2 and IF-3 on the 30S subunit to which N-formylmethionyl-tRNA(fMet) subsequently binds. Helps modulate mRNA selection, yielding the 30S pre-initiation complex (PIC). Upon addition of the 50S ribosomal subunit IF-1, IF-2 and IF-3 are released leaving the mature 70S translation initiation complex. This is Translation initiation factor IF-1 from Roseiflexus castenholzii (strain DSM 13941 / HLO8).